The primary structure comprises 291 residues: Phosphate-binding protein PstS 2 (291 aa).

Residues 1 to 21 form the signal peptide; it reads MKFKKMLTLAAIGLSGFGLVA. The N-palmitoyl cysteine moiety is linked to residue Cys22. A lipid anchor (S-diacylglycerol cysteine) is attached at Cys22.

The protein belongs to the PstS family. As to quaternary structure, the complex is composed of two ATP-binding proteins (PstB), two transmembrane proteins (PstC and PstA) and a solute-binding protein (PstS).

The protein resides in the cell membrane. Functionally, part of the ABC transporter complex PstSACB involved in phosphate import. The sequence is that of Phosphate-binding protein PstS 2 (pstS2) from Streptococcus pneumoniae serotype 4 (strain ATCC BAA-334 / TIGR4).